We begin with the raw amino-acid sequence, 944 residues long: Protein translocase subunit SecA (944 aa).

Residues glutamine 77, 95–99 (GEGKT), and aspartate 484 contribute to the ATP site. A disordered region spans residues 920 to 944 (EQEKQTRKKKKKKPHEDESSKTKIG). Positions 933–944 (PHEDESSKTKIG) are enriched in basic and acidic residues.

This sequence belongs to the SecA family. In terms of assembly, monomer and homodimer. Part of the essential Sec protein translocation apparatus which comprises SecA, SecYEG and auxiliary proteins SecDF. Other proteins may also be involved.

It localises to the cell membrane. Its subcellular location is the cytoplasm. It carries out the reaction ATP + H2O + cellular proteinSide 1 = ADP + phosphate + cellular proteinSide 2.. Its function is as follows. Part of the Sec protein translocase complex. Interacts with the SecYEG preprotein conducting channel. Has a central role in coupling the hydrolysis of ATP to the transfer of proteins into and across the cell membrane, serving as an ATP-driven molecular motor driving the stepwise translocation of polypeptide chains across the membrane. The sequence is that of Protein translocase subunit SecA from Mycoplasma mycoides subsp. mycoides SC (strain CCUG 32753 / NCTC 10114 / PG1).